The following is a 178-amino-acid chain: Protein modigliani (178 aa).

As to quaternary structure, probably homodimerizes. Component of the MTV complex, composed of moi/modigliani, tea and ver/verrocchio. Interacts with ver/verrochio and tea (via C-terminus); the interactions are direct and require fully intact moi/modigliani and ver/verrocchio. The MTV complex is recruited to telomeres by the HipHop-HOAP complex, consisting of HipHop, cav/HOAP and Su(var)205/HP1 to form the terminin telomere-capping complex. Interacts with cav/HOAP and Su(var)205/HP1; the interactions are direct. Probably interacts with peo (via N-terminus and UBC domain).

The protein localises to the nucleus. Its subcellular location is the chromosome. The protein resides in the telomere. Functionally, part of the MTV complex that associates with the HipHop-HOAP complex to form the terminin telomere-capping complex involved in telomere maintenance and prevention of telomere fusion. Potentially functions downstream of mei-41/ATR. As part of the MTV complex binds single stranded DNA in a sequence-independent manner, protecting it from degradation. The protein is Protein modigliani of Drosophila melanogaster (Fruit fly).